A 659-amino-acid polypeptide reads, in one-letter code: DNA ligase (659 aa).

NAD(+)-binding positions include aspartate 31–aspartate 35, serine 80–leucine 81, and glutamate 109. Residue lysine 111 is the N6-AMP-lysine intermediate of the active site. NAD(+) is bound by residues arginine 132, glutamate 166, lysine 281, and lysine 305. Zn(2+)-binding residues include cysteine 398, cysteine 401, cysteine 416, and cysteine 421. Positions valine 581–glutamate 659 constitute a BRCT domain.

The protein belongs to the NAD-dependent DNA ligase family. LigA subfamily. It depends on Mg(2+) as a cofactor. Mn(2+) is required as a cofactor.

It catalyses the reaction NAD(+) + (deoxyribonucleotide)n-3'-hydroxyl + 5'-phospho-(deoxyribonucleotide)m = (deoxyribonucleotide)n+m + AMP + beta-nicotinamide D-nucleotide.. DNA ligase that catalyzes the formation of phosphodiester linkages between 5'-phosphoryl and 3'-hydroxyl groups in double-stranded DNA using NAD as a coenzyme and as the energy source for the reaction. It is essential for DNA replication and repair of damaged DNA. The polypeptide is DNA ligase (Acholeplasma laidlawii (strain PG-8A)).